Here is a 348-residue protein sequence, read N- to C-terminus: Chlorophyll(ide) b reductase NOL, chloroplastic (348 aa).

Residues 1–61 (MATWSGFNVS…TRQNLTVTPS (61 aa)) constitute a chloroplast transit peptide. 84-108 (ITGSTKGIGYALAREFLKAGDNVVI) provides a ligand contact to NAD(+). Residue tyrosine 233 is the Proton acceptor of the active site.

It belongs to the short-chain dehydrogenases/reductases (SDR) family. Interacts with NCY1 to form a complex that acts as a chlorophyll b reductase. Interacts with HCAR, RCCR and the LHCII complex. Part of a SGR1-CCE-LHCII complex, which acts in chlorophyll breakdown.

Its subcellular location is the plastid. It is found in the chloroplast thylakoid membrane. It catalyses the reaction 7(1)-hydroxychlorophyllide a + NAD(+) = chlorophyllide b + NADH + H(+). The catalysed reaction is 7(1)-hydroxychlorophyllide a + NADP(+) = chlorophyllide b + NADPH + H(+). Required for chlorophyll b degradation. Chlorophyll b, chlorophyllide b, pheophorbide b and pheophytin b can be used as substrates. Belongs to the chlorophyll catabolic enzymes (CCEs). The protein is Chlorophyll(ide) b reductase NOL, chloroplastic (NOL) of Arabidopsis thaliana (Mouse-ear cress).